A 724-amino-acid polypeptide reads, in one-letter code: Protein BCH1 (724 aa).

Residues 51-65 show a composition bias toward low complexity; the sequence is TTATASANDNGATSN. The tract at residues 51–71 is disordered; the sequence is TTATASANDNGATSNINGQDP. Residues 711-724 form a CHS5-binding region; it reads LNFLKNFTNDTFDN.

This sequence belongs to the CHAPS family. As to quaternary structure, component of the CHS5/6 complex composed of the 4 CHAPS proteins BCH1, BCH2, BUD7, and CHS6 as well as at least CHS5 and GTP-bound ARF1. The complex interacts with the cargo protein CHS3.

The protein resides in the golgi apparatus. The protein localises to the trans-Golgi network membrane. Functionally, member of the CHS5-ARF1P-binding proteins (CHAPS) which mediates export of specific cargo proteins, including chitin synthase CHS3. The protein is Protein BCH1 (BCH1) of Saccharomyces cerevisiae (strain ATCC 204508 / S288c) (Baker's yeast).